A 194-amino-acid polypeptide reads, in one-letter code: Imidazoleglycerol-phosphate dehydratase (194 aa).

Belongs to the imidazoleglycerol-phosphate dehydratase family.

The protein localises to the cytoplasm. The catalysed reaction is D-erythro-1-(imidazol-4-yl)glycerol 3-phosphate = 3-(imidazol-4-yl)-2-oxopropyl phosphate + H2O. It participates in amino-acid biosynthesis; L-histidine biosynthesis; L-histidine from 5-phospho-alpha-D-ribose 1-diphosphate: step 6/9. In Bacillus cereus (strain AH187), this protein is Imidazoleglycerol-phosphate dehydratase.